A 771-amino-acid polypeptide reads, in one-letter code: Protein translocase subunit SecA 2 (771 aa).

ATP contacts are provided by residues Gln-91, 109–113 (GEGKT), and Asp-496.

It belongs to the SecA family. As to quaternary structure, monomer and homodimer. Part of the essential Sec protein translocation apparatus which comprises SecA, SecYEG and auxiliary proteins SecDF. Other proteins may also be involved.

It is found in the cell membrane. Its subcellular location is the cytoplasm. The enzyme catalyses ATP + H2O + cellular proteinSide 1 = ADP + phosphate + cellular proteinSide 2.. Functionally, part of the Sec protein translocase complex. Interacts with the SecYEG preprotein conducting channel. Has a central role in coupling the hydrolysis of ATP to the transfer of proteins into and across the cell membrane, serving as an ATP-driven molecular motor driving the stepwise translocation of polypeptide chains across the membrane. In Corynebacterium jeikeium (strain K411), this protein is Protein translocase subunit SecA 2.